Here is a 463-residue protein sequence, read N- to C-terminus: tRNA-2-methylthio-N(6)-dimethylallyladenosine synthase (463 aa).

In terms of domain architecture, MTTase N-terminal spans 19–135 (RSYWITTFGC…LENLLGKVDL (117 aa)). [4Fe-4S] cluster contacts are provided by C28, C64, C98, C170, C174, and C177. The Radical SAM core domain occupies 156–393 (RESSICGWVN…NALVEKTARN (238 aa)). In terms of domain architecture, TRAM spans 396 to 463 (QRYINNIESV…RPFSLTGELC (68 aa)).

Belongs to the methylthiotransferase family. MiaB subfamily. In terms of assembly, monomer. Requires [4Fe-4S] cluster as cofactor.

The protein resides in the cytoplasm. It carries out the reaction N(6)-dimethylallyladenosine(37) in tRNA + (sulfur carrier)-SH + AH2 + 2 S-adenosyl-L-methionine = 2-methylsulfanyl-N(6)-dimethylallyladenosine(37) in tRNA + (sulfur carrier)-H + 5'-deoxyadenosine + L-methionine + A + S-adenosyl-L-homocysteine + 2 H(+). Functionally, catalyzes the methylthiolation of N6-(dimethylallyl)adenosine (i(6)A), leading to the formation of 2-methylthio-N6-(dimethylallyl)adenosine (ms(2)i(6)A) at position 37 in tRNAs that read codons beginning with uridine. The sequence is that of tRNA-2-methylthio-N(6)-dimethylallyladenosine synthase from Prochlorococcus marinus (strain MIT 9312).